Reading from the N-terminus, the 107-residue chain is UPF0235 protein RPC_0058 (107 aa).

It belongs to the UPF0235 family.

This is UPF0235 protein RPC_0058 from Rhodopseudomonas palustris (strain BisB18).